A 338-amino-acid chain; its full sequence is Oligopeptide transport ATP-binding protein OppD (338 aa).

The region spanning 7–257 (LEAKQVSVAF…PKHPYTRSLL (251 aa)) is the ABC transporter domain. Residue 43–50 (GESGSGKS) coordinates ATP.

Belongs to the ABC transporter superfamily. As to quaternary structure, the complex is composed of two ATP-binding proteins (OppD and OppF), two transmembrane proteins (OppB and OppC) and a solute-binding protein (OppA).

It is found in the cell membrane. The enzyme catalyses a [peptide](out) + ATP + H2O = a [peptide](in) + ADP + phosphate + H(+). Functionally, part of the ABC transporter complex OppABCDF involved in the uptake of oligopeptides. Probably responsible for energy coupling to the transport system. Essential for uptake of peptides larger than three amino acids and for growth in milk. The polypeptide is Oligopeptide transport ATP-binding protein OppD (Lactococcus lactis subsp. cremoris (strain SK11)).